The primary structure comprises 256 residues: Protein RKD4 (256 aa).

The region spanning 130-216 is the RWP-RK domain; the sequence is EKVTVKKKRN…MEEEVKNLEE (87 aa). The stretch at 190 to 224 forms a coiled coil; it reads RKLKSLNSLIKNLKNVGMEEEVKNLEEHRFLIEQE.

It localises to the nucleus. In terms of biological role, putative transcription factor. This is Protein RKD4 (RKD4) from Arabidopsis thaliana (Mouse-ear cress).